The following is an 878-amino-acid chain: Aconitate hydratase A (878 aa).

[4Fe-4S] cluster contacts are provided by cysteine 426, cysteine 492, and cysteine 495.

It belongs to the aconitase/IPM isomerase family. As to quaternary structure, monomer. It depends on [4Fe-4S] cluster as a cofactor.

It carries out the reaction citrate = D-threo-isocitrate. The enzyme catalyses (2S,3R)-3-hydroxybutane-1,2,3-tricarboxylate = 2-methyl-cis-aconitate + H2O. It participates in carbohydrate metabolism; tricarboxylic acid cycle; isocitrate from oxaloacetate: step 2/2. It functions in the pathway organic acid metabolism; propanoate degradation. In terms of biological role, involved in the catabolism of short chain fatty acids (SCFA) via the tricarboxylic acid (TCA)(acetyl degradation route) and probably the 2-methylcitrate cycle I (propionate degradation route). Catalyzes the reversible isomerization of citrate to isocitrate via cis-aconitate. Could catalyze the hydration of 2-methyl-cis-aconitate to yield (2R,3S)-2-methylisocitrate. The apo form of AcnA functions as a RNA-binding regulatory protein. The chain is Aconitate hydratase A (acnA) from Rickettsia felis (strain ATCC VR-1525 / URRWXCal2) (Rickettsia azadi).